The following is a 238-amino-acid chain: Pyridoxine 5'-phosphate synthase (238 aa).

Residues N7 and R18 each contribute to the 3-amino-2-oxopropyl phosphate site. The Proton acceptor role is filled by H43. R45 and H50 together coordinate 1-deoxy-D-xylulose 5-phosphate. Catalysis depends on E70, which acts as the Proton acceptor. Position 100 (T100) interacts with 1-deoxy-D-xylulose 5-phosphate. H190 functions as the Proton donor in the catalytic mechanism. Residues D191 and 213 to 214 (GH) each bind 3-amino-2-oxopropyl phosphate.

The protein belongs to the PNP synthase family. In terms of assembly, homooctamer; tetramer of dimers.

The protein resides in the cytoplasm. The enzyme catalyses 3-amino-2-oxopropyl phosphate + 1-deoxy-D-xylulose 5-phosphate = pyridoxine 5'-phosphate + phosphate + 2 H2O + H(+). The protein operates within cofactor biosynthesis; pyridoxine 5'-phosphate biosynthesis; pyridoxine 5'-phosphate from D-erythrose 4-phosphate: step 5/5. Catalyzes the complicated ring closure reaction between the two acyclic compounds 1-deoxy-D-xylulose-5-phosphate (DXP) and 3-amino-2-oxopropyl phosphate (1-amino-acetone-3-phosphate or AAP) to form pyridoxine 5'-phosphate (PNP) and inorganic phosphate. The sequence is that of Pyridoxine 5'-phosphate synthase from Phocaeicola vulgatus (strain ATCC 8482 / DSM 1447 / JCM 5826 / CCUG 4940 / NBRC 14291 / NCTC 11154) (Bacteroides vulgatus).